Here is a 130-residue protein sequence, read N- to C-terminus: MKKVNYFGTGRRKSSVARVILTNGTGKITINTRDFEKYLPLPATRLEMIQPLELTEKREVFDVSVNVNGGGLSAQAGAIRLGIARALIESIPELRAILKKSGLLTRDARCVERKKYGLKKARRAPQFSKR.

It belongs to the universal ribosomal protein uS9 family.

The polypeptide is Small ribosomal subunit protein uS9 (Aster yellows witches'-broom phytoplasma (strain AYWB)).